A 227-amino-acid polypeptide reads, in one-letter code: Ribonuclease 3 (227 aa).

An RNase III domain is found at 5-127 (LNALQLRLQH…LIGAVYLDAG (123 aa)). Glu-40 contacts Mg(2+). Residue Asp-44 is part of the active site. Asp-113 and Glu-116 together coordinate Mg(2+). Glu-116 is an active-site residue. In terms of domain architecture, DRBM spans 154–224 (DAKTALQEWL…ATAMLELLKA (71 aa)).

The protein belongs to the ribonuclease III family. Homodimer. Requires Mg(2+) as cofactor.

Its subcellular location is the cytoplasm. The catalysed reaction is Endonucleolytic cleavage to 5'-phosphomonoester.. Functionally, digests double-stranded RNA. Involved in the processing of primary rRNA transcript to yield the immediate precursors to the large and small rRNAs (23S and 16S). Processes some mRNAs, and tRNAs when they are encoded in the rRNA operon. Processes pre-crRNA and tracrRNA of type II CRISPR loci if present in the organism. In Delftia acidovorans (strain DSM 14801 / SPH-1), this protein is Ribonuclease 3.